Reading from the N-terminus, the 142-residue chain is Small ribosomal subunit protein uS12 (142 aa).

The protein belongs to the universal ribosomal protein uS12 family. Part of the 30S ribosomal subunit.

In terms of biological role, with S4 and S5 plays an important role in translational accuracy. Located at the interface of the 30S and 50S subunits. The protein is Small ribosomal subunit protein uS12 of Methanoculleus marisnigri (strain ATCC 35101 / DSM 1498 / JR1).